The primary structure comprises 252 residues: Outer membrane protein P1 (252 aa).

Residues 1-23 (METTTKLAIGVSALCCLASAAFA) form the signal peptide.

This sequence belongs to the Coxiella porin P1 (CPP1) (TC 1.B.43) family. As to quaternary structure, may form trimers.

The protein localises to the cell outer membrane. Its function is as follows. Able to form a pore in lipid bilayers. The protein is Outer membrane protein P1 (ompP1) of Coxiella burnetii (strain RSA 493 / Nine Mile phase I).